The chain runs to 264 residues: MKPTTIASLQKCKQDKKRFATITAYDYSFAKLFADEGINVMLVGDSLGMTVQGHDSTLPVTVADIAYHTAAVRRGAPNCLLLADLPFMAYATPEQAFENAATVMRAGANMVKIEGGEWLVETVQMLTERAVPVCGHLGLTPQSVNIFGGYKVQGRGDEAGDRLLSDALALEAAGAQLLVLECVPVELAKRITEALAIPVIGIGAGNVTDGQILVMHDAFGITGGHIPKFAKNFLAETGDIRAAVRQYMAEVESGVYPGEEHSFH.

2 residues coordinate Mg(2+): Asp45 and Asp84. 3-methyl-2-oxobutanoate-binding positions include 45-46 (DS), Asp84, and Lys112. Residue Glu114 coordinates Mg(2+). The active-site Proton acceptor is the Glu181.

This sequence belongs to the PanB family. As to quaternary structure, homodecamer; pentamer of dimers. The cofactor is Mg(2+).

The protein localises to the cytoplasm. The enzyme catalyses 3-methyl-2-oxobutanoate + (6R)-5,10-methylene-5,6,7,8-tetrahydrofolate + H2O = 2-dehydropantoate + (6S)-5,6,7,8-tetrahydrofolate. The protein operates within cofactor biosynthesis; (R)-pantothenate biosynthesis; (R)-pantoate from 3-methyl-2-oxobutanoate: step 1/2. Catalyzes the reversible reaction in which hydroxymethyl group from 5,10-methylenetetrahydrofolate is transferred onto alpha-ketoisovalerate to form ketopantoate. This chain is 3-methyl-2-oxobutanoate hydroxymethyltransferase, found in Escherichia coli O81 (strain ED1a).